Reading from the N-terminus, the 354-residue chain is UPF0283 membrane protein Meso_1416 (354 aa).

Residues 1–28 (MSEPRRPAAFRIEPAPSPSPEATREDVR) form a disordered region. Helical transmembrane passes span 71 to 91 (LGAVFVAALGMLVSLAAGLWA) and 105 to 125 (LGWLGAALVAVAALALFAIVV).

This sequence belongs to the UPF0283 family.

The protein resides in the cell inner membrane. In Chelativorans sp. (strain BNC1), this protein is UPF0283 membrane protein Meso_1416.